The primary structure comprises 322 residues: ATP-dependent 6-phosphofructokinase (322 aa).

Gly-11 is a binding site for ATP. Position 21 to 25 (Arg-21 to Arg-25) interacts with ADP. ATP is bound by residues Arg-72 to Cys-73 and Gly-102 to Ser-105. Asp-103 contacts Mg(2+). Thr-127–Asp-129 contacts substrate. The active-site Proton acceptor is Asp-129. Arg-156 is a binding site for ADP. Residues Arg-164 and Met-171–Arg-173 each bind substrate. Residues Gly-187 to Glu-189, Arg-213, and Lys-215 to His-217 contribute to the ADP site. Substrate contacts are provided by residues Glu-224, Arg-245, and His-251 to Arg-254.

The protein belongs to the phosphofructokinase type A (PFKA) family. ATP-dependent PFK group I subfamily. Prokaryotic clade 'B1' sub-subfamily. In terms of assembly, homotetramer. Requires Mg(2+) as cofactor.

The protein localises to the cytoplasm. The catalysed reaction is beta-D-fructose 6-phosphate + ATP = beta-D-fructose 1,6-bisphosphate + ADP + H(+). The protein operates within carbohydrate degradation; glycolysis; D-glyceraldehyde 3-phosphate and glycerone phosphate from D-glucose: step 3/4. Its activity is regulated as follows. Allosterically activated by ADP and other diphosphonucleosides, and allosterically inhibited by phosphoenolpyruvate. Catalyzes the phosphorylation of D-fructose 6-phosphate to fructose 1,6-bisphosphate by ATP, the first committing step of glycolysis. The sequence is that of ATP-dependent 6-phosphofructokinase from Staphylococcus epidermidis (strain ATCC 12228 / FDA PCI 1200).